A 309-amino-acid chain; its full sequence is Glutaminase (309 aa).

Ser65, Asn117, Glu162, Asn169, Tyr193, Tyr245, and Val263 together coordinate substrate.

This sequence belongs to the glutaminase family. As to quaternary structure, homotetramer.

The catalysed reaction is L-glutamine + H2O = L-glutamate + NH4(+). The polypeptide is Glutaminase (Bacillus cereus (strain ATCC 10987 / NRS 248)).